We begin with the raw amino-acid sequence, 128 residues long: Glycine cleavage system H protein (128 aa).

In terms of domain architecture, Lipoyl-binding spans 24 to 106 (VYTVGITEHA…YAEGFLFQIK (83 aa)). K65 carries the post-translational modification N6-lipoyllysine.

This sequence belongs to the GcvH family. As to quaternary structure, the glycine cleavage system is composed of four proteins: P, T, L and H. (R)-lipoate is required as a cofactor.

Its function is as follows. The glycine cleavage system catalyzes the degradation of glycine. The H protein shuttles the methylamine group of glycine from the P protein to the T protein. The protein is Glycine cleavage system H protein of Serratia proteamaculans (strain 568).